Consider the following 336-residue polypeptide: Myb family transcription factor PHL8 (336 aa).

Residues 31–91 form the HTH myb-type domain; that stretch reads TDAKPRLKWT…HLQKYRLGKS (61 aa). Residues 62 to 87 constitute a DNA-binding region (H-T-H motif); sequence PKGLMKVMEIPGLTLYHLKSHLQKYR. The interval 100–134 is disordered; the sequence is EVSSASENQEVESKNDSRDLRGCSVTEENSNPAKE. Residues 110 to 120 show a composition bias toward basic and acidic residues; the sequence is VESKNDSRDLR. A coiled-coil region spans residues 139–159; that stretch reads TEALQMQMEVQKKLHEQIEVQ. The short motif at 152 to 157 is the LHEQLE element; it reads LHEQIE.

It belongs to the MYB-CC family.

The protein localises to the nucleus. The sequence is that of Myb family transcription factor PHL8 from Arabidopsis thaliana (Mouse-ear cress).